Here is a 2462-residue protein sequence, read N- to C-terminus: Non-reducing polyketide synthase ausA (2462 aa).

The tract at residues 16–253 is N-terminal acylcarrier protein transacylase domain (SAT); that stretch reads VFFGPVYPEL…HTADHIPAMK (238 aa). One can recognise a Ketosynthase family 3 (KS3) domain in the interval 385–801; sequence SAPIAVTGFA…GSNAVIVVKE (417 aa). Residues Cys-550, His-685, and His-724 each act as for beta-ketoacyl synthase activity in the active site. The malonyl-CoA:ACP transacylase (MAT) domain stretch occupies residues 904 to 1208; that stretch reads LCFGGQTGDT…LPIDLQESTA (305 aa). Ser-991 serves as the catalytic For acyl/malonyl transferase activity. Residues 1274–1403 are N-terminal hotdog fold; sequence HDDGLLQLVE…GKVLLDPQAA (130 aa). In terms of domain architecture, PKS/mFAS DH spans 1274 to 1581; sequence HDDGLLQLVE…FTSVSIQSLK (308 aa). The product template (PT) domain stretch occupies residues 1277–1580; the sequence is GLLQLVERDA…TFTSVSIQSL (304 aa). His-1307 acts as the Proton acceptor; for dehydratase activity in catalysis. A C-terminal hotdog fold region spans residues 1431–1581; it reads SSNGLKRATV…FTSVSIQSLK (151 aa). Asp-1489 functions as the Proton donor; for dehydratase activity in the catalytic mechanism. The region spanning 1613–1690 is the Carrier domain; the sequence is VSDDHHLRAV…GLAHRISPSS (78 aa). Ser-1650 bears the O-(pantetheine 4'-phosphoryl)serine mark. Residues 1850–2083 form a methyltransferase (CMeT) domain region; sequence QHASEHKLLR…GFNWVDWTDN (234 aa). Residues 2112–2462 form a thioesterase (TE) domain region; that stretch reads TPARVETVRY…YEFLRQHVAV (351 aa). Active-site for thioesterase activity residues include Ser-2235, Asp-2398, and His-2430.

It catalyses the reaction 3 malonyl-CoA + acetyl-CoA + 2 S-adenosyl-L-methionine = 3,5-dimethylorsellinate + 2 S-adenosyl-L-homocysteine + 3 CO2 + 4 CoA. Its pathway is secondary metabolite biosynthesis; terpenoid biosynthesis. Non-reducing polyketide synthase; part of the gene cluster that mediates the biosynthesis of calidodehydroaustin, a fungal meroterpenoid. The first step of the pathway is the synthesis of 3,5-dimethylorsellinic acid by the polyketide synthase ausA. 3,5-dimethylorsellinic acid is then prenylated by the polyprenyl transferase ausN. Further epoxidation by the FAD-dependent monooxygenase ausM and cyclization by the probable terpene cyclase ausL lead to the formation of protoaustinoid A. Protoaustinoid A is then oxidized to spiro-lactone preaustinoid A3 by the combined action of the FAD-binding monooxygenases ausB and ausC, and the dioxygenase ausE. Acid-catalyzed keto-rearrangement and ring contraction of the tetraketide portion of preaustinoid A3 by ausJ lead to the formation of preaustinoid A4. The aldo-keto reductase ausK, with the help of ausH, is involved in the next step by transforming preaustinoid A4 into isoaustinone which is in turn hydroxylated by the P450 monooxygenase ausI to form austinolide. The cytochrome P450 monooxygenase ausG modifies austinolide to austinol. Austinol is further acetylated to austin by the O-acetyltransferase ausP, which spontaneously changes to dehydroaustin. The cytochrome P450 monooxygenase ausR then converts dehydroaustin is into 7-dehydrodehydroaustin. The hydroxylation catalyzed by ausR permits the O-acetyltransferase ausQ to add an additional acetyl group to the molecule, leading to the formation of acetoxydehydroaustin. The short chain dehydrogenase ausT catalyzes the reduction of the double bond present between carbon atoms 1 and 2 to convert 7-dehydrodehydroaustin into 1,2-dihydro-7-hydroxydehydroaustin. AusQ catalyzes not only an acetylation reaction but also the addition of the PKS ausV diketide product to 1,2-dihydro-7-hydroxydehydroaustin, forming precalidodehydroaustin. Finally, the iron/alpha-ketoglutarate-dependent dioxygenase converts precalidodehydroaustin into calidodehydroaustin. In Aspergillus calidoustus, this protein is Non-reducing polyketide synthase ausA.